Here is a 494-residue protein sequence, read N- to C-terminus: BTB/POZ domain and ankyrin repeat-containing protein NH5.1 (494 aa).

The 106-residue stretch at 25–130 (SDVAFSVEGR…LYSGQASVAA (106 aa)) folds into the BTB domain. The disordered stretch occupies residues 60–94 (NHQPPPPPPPLNWPMAGGGGGGSGGGGRGGAGGGG). The span at 61-71 (HQPPPPPPPLN) shows a compositional bias: pro residues. The span at 75-94 (AGGGGGGSGGGGRGGAGGGG) shows a compositional bias: gly residues. The segment at 136–150 (LPGCGARGCWHTRCG) adopts a C2HC NPR-type zinc-finger fold. The Zn(2+) site is built by C139, C144, H146, and C149. ANK repeat units lie at residues 274-302 (NKIRRMRRALDAADIELVKLMVMGEGLDL), 303-333 (DDALAVHYAVQHCNRDVVKALLELGAADVNS), 338-367 (TGKTALHLAAEMVSPDMVSVLLDHHADPNS), and 371-405 (DGVTPLDVLRSLTSEFLFKGAVPGLTHIEPNKLRL). Disordered stretches follow at residues 421 to 443 (DGAPVTGGAEAGGSDGGNFPRSD) and 469 to 494 (AAGEGRKSNNGRGSPPPAMYFPNGFA).

Belongs to the plant 'ANKYRIN-BTB/POZ' family. 'NOOT-BOP-COCH-like' (NBCL) subfamily. Homodimer. Interacts with TGAL5, TGAL7, TGAL8 and TGAL9.

Its subcellular location is the nucleus. It localises to the cytoplasm. It functions in the pathway protein modification; protein ubiquitination. May act as a substrate-specific adapter of an E3 ubiquitin-protein ligase complex (CUL3-RBX1-BTB) which mediates the ubiquitination and subsequent proteasomal degradation of target proteins. Transcriptional co-regulator involved in the promotion of leaf and floral meristem fate and determinacy. Required for the abscission of senescent organs, probably by regulating the cell wall disorganization in abscission zones (AZs, e.g. pulvini at the base of leaves). This Oryza sativa subsp. japonica (Rice) protein is BTB/POZ domain and ankyrin repeat-containing protein NH5.1.